The primary structure comprises 140 residues: Large ribosomal subunit protein uL14 (140 aa).

Ser-17 is subject to Phosphoserine. Position 38 is a phosphotyrosine (Tyr-38).

It belongs to the universal ribosomal protein uL14 family. Component of the large ribosomal subunit.

Its subcellular location is the cytoplasm. Functionally, component of the large ribosomal subunit. The ribosome is a large ribonucleoprotein complex responsible for the synthesis of proteins in the cell. In Pongo abelii (Sumatran orangutan), this protein is Large ribosomal subunit protein uL14 (RPL23).